Reading from the N-terminus, the 181-residue chain is Bradykinin potentiating and C-type natriuretic peptides (181 aa).

Residues M1–G23 form the signal peptide. Positions K24–Q27 are excised as a propeptide. Pyrrolidone carboxylic acid is present on residues Q28 and Q31. Positions L41–V43 are excised as a propeptide. The residue at position 44 (Q44) is a Pyrrolidone carboxylic acid. Positions T50–L52 are excised as a propeptide. Pyrrolidone carboxylic acid is present on Q53. Residues A59–K159 constitute a propeptide that is removed on maturation. Positions E74 to A150 are disordered. Residues S104–S114 are compositionally biased toward low complexity. Over residues A140–A150 the composition is skewed to gly residues. A disulfide bridge connects residues C165 and C181.

It in the N-terminal section; belongs to the bradykinin-potentiating peptide family. In the C-terminal section; belongs to the natriuretic peptide family. Venom gland.

The protein localises to the secreted. Bradykinin-potentiating peptide both inhibits the activity of the angiotensin-converting enzyme (ACE) and enhances the action of bradykinin by inhibiting the peptidases that inactivate it. It acts as an indirect hypotensive agent. Synthetic Cdt1a, Cdt1b and the short hexapeptide Cdt3 are able to potentiate the hypotensive effect mediated by Bk on the blood pressure of anesthetized rats. Functionally, has a vasorelaxant activity in rat aortic strips and a diuretic potency in anesthetized rats. May act by activating natriuretic receptors (NPR1 and/or NPR2). The protein is Bradykinin potentiating and C-type natriuretic peptides of Crotalus durissus terrificus (South American rattlesnake).